A 103-amino-acid polypeptide reads, in one-letter code: Large ribosomal subunit protein bL21 (103 aa).

It belongs to the bacterial ribosomal protein bL21 family. In terms of assembly, part of the 50S ribosomal subunit. Contacts protein L20.

Its function is as follows. This protein binds to 23S rRNA in the presence of protein L20. The protein is Large ribosomal subunit protein bL21 of Pseudomonas paraeruginosa (strain DSM 24068 / PA7) (Pseudomonas aeruginosa (strain PA7)).